The primary structure comprises 441 residues: Mitochondrial inner membrane protein OXA1L (441 aa).

The Mitochondrial intermembrane segment spans residues methionine 1–glutamate 113. Residues leucine 114–valine 134 form a helical membrane-spanning segment. Over asparagine 135–proline 139 the chain is Mitochondrial matrix. A helical membrane pass occupies residues tryptophan 140–valine 160. At lysine 161–lysine 212 the chain is on the mitochondrial intermembrane side. Residues leucine 213–alanine 233 traverse the membrane as a helical segment. Residues leucine 234–aspartate 260 are Mitochondrial matrix-facing. The chain crosses the membrane as a helical span at residues proline 261–alanine 281. Residues glutamate 282–arginine 298 are Mitochondrial intermembrane-facing. The chain crosses the membrane as a helical span at residues leucine 299 to tryptophan 319. The Mitochondrial matrix portion of the chain corresponds to leucine 320–glycine 441. Serine 364 carries the post-translational modification Phosphoserine. Threonine 400 carries the phosphothreonine modification. Positions proline 405 to glycine 441 are disordered. The span at proline 418–lysine 429 shows a compositional bias: low complexity.

Belongs to the OXA1/ALB3/YidC family. As to quaternary structure, monomer; predominantly monomeric at low salt concentrations. Homooligomer; predominantly homooligomeric at high salt concentrations. Associates with the mitochondrial ribosome. Associates preferentially as a dimer with the large ribosomal subunit 39S of the mitochondrial ribosome. Interacts with OXA1L; promoting cotranslational quality control in mitochondria.

It is found in the mitochondrion inner membrane. In terms of biological role, mitochondrial membrane insertase that mediates the cotranslational insertion of integral membrane proteins into the mitochondrial inner membrane. Essential for the activity and assembly of cytochrome oxidase. Required for the correct biogenesis of ATP synthase and complex I in mitochondria. The chain is Mitochondrial inner membrane protein OXA1L (OXA1L) from Bos taurus (Bovine).